The following is a 369-amino-acid chain: Core histone macro-H2A.1 (369 aa).

The Histone H2A domain occupies 2-117 (SSRGGKKKST…NIHPELLAKK (116 aa)). An N6-lactoyllysine; alternate mark is found at K7 and K9. N6-methyllysine is present on K18. K116 is subject to N6-acetyllysine; alternate. Residue K116 forms a Glycyl lysine isopeptide (Lys-Gly) (interchain with G-Cter in ubiquitin); alternate linkage. K117 participates in a covalent cross-link: Glycyl lysine isopeptide (Lys-Gly) (interchain with G-Cter in ubiquitin). K123 is modified (N6-acetyllysine; alternate). K123 carries the N6,N6-dimethyllysine; alternate modification. A Glycyl lysine isopeptide (Lys-Gly) (interchain with G-Cter in SUMO2); alternate cross-link involves residue K123. The segment at 128-180 (ITPPPAKKAKSPSQKKPVSKKAGGKKGARKSKKKQGEVSKAASADSTTEGTPA) is disordered. T129 bears the Phosphothreonine mark. A compositionally biased stretch (basic residues) spans 144–160 (PVSKKAGGKKGARKSKK). A Glycyl lysine isopeptide (Lys-Gly) (interchain with G-Cter in SUMO2) cross-link involves residue K167. Phosphoserine occurs at positions 170 and 173. T178 carries the phosphothreonine modification. One can recognise a Macro domain in the interval 184-367 (TVLSTKSLFL…IYVQEMAKLD (184 aa)). A Glycyl lysine isopeptide (Lys-Gly) (interchain with G-Cter in SUMO2) cross-link involves residue K189. A glycoprotein-binding residues include D203, I204, V226, S275, G312, S313, G314, and N316. K320 is covalently cross-linked (Glycyl lysine isopeptide (Lys-Gly) (interchain with G-Cter in SUMO2)).

Belongs to the histone H2A family. The nucleosome is a histone octamer containing two molecules each of H2A, H2B, H3 and H4 assembled in one H3-H4 heterotetramer and two H2A-H2B heterodimers. Interacts with HDAC1 and HDAC2. Interacts with SPOP. Part of a complex consisting of MACROH2A1, CUL3 and SPOP. In terms of assembly, interacts with PARP1. Monoubiquitinated at either Lys-116 or Lys-117. May also be polyubiquitinated. Ubiquitination is mediated by the CUL3/SPOP E3 complex and does not promote proteasomal degradation. Instead, it is required for enrichment in inactive X chromosome chromatin. In terms of tissue distribution, widely expressed.

It is found in the nucleus. The protein localises to the chromosome. In terms of biological role, variant histone H2A which replaces conventional H2A in a subset of nucleosomes where it represses transcription. Nucleosomes wrap and compact DNA into chromatin, limiting DNA accessibility to the cellular machineries which require DNA as a template. Histones thereby play a central role in transcription regulation, DNA repair, DNA replication and chromosomal stability. DNA accessibility is regulated via a complex set of post-translational modifications of histones, also called histone code, and nucleosome remodeling. Involved in stable X chromosome inactivation. Inhibits the binding of transcription factors, including NF-kappa-B, and interferes with the activity of remodeling SWI/SNF complexes. Inhibits histone acetylation by EP300 and recruits class I HDACs, which induces a hypoacetylated state of chromatin. Its function is as follows. Isoform that specifically binds poly-ADP-ribose and O-acetyl-ADP-ribose and plays a key role in NAD(+) metabolism. Able to bind to the ends of poly-ADP-ribose chains created by PARP1 and cap them. This prevents PARP1 from further addition of ADP-ribose and thus limits the consumption of nuclear NAD(+), allowing the cell to maintain proper NAD(+) levels in both the nucleus and the mitochondria to promote proper mitochondrial respiration. Increases the expression of genes involved in redox metabolism, including SOD3. Functionally, in contrast to isoform 1, does not bind poly-ADP-ribose. Represses SOD3 gene expression. The sequence is that of Core histone macro-H2A.1 from Homo sapiens (Human).